Reading from the N-terminus, the 540-residue chain is Acrosin-binding protein (540 aa).

A signal peptide spans 1-24; the sequence is MKLAASFLLMLLEVLLLPETPLSA. A pro-ACR binding region spans residues 25-104; sequence EEALASTPGS…ASWFESFCQF (80 aa). Residues 25–272 constitute a propeptide, removed in mature form; sequence EEALASTPGS…NPSFFTPRVR (248 aa). A disordered region spans residues 181–266; it reads SLSLGGKEQQ…SKSLSSNPSF (86 aa). The span at 195-213 shows a compositional bias: basic and acidic residues; it reads LGLEQQHKQEQIQEHKLEE. The span at 214–241 shows a compositional bias: acidic residues; that stretch reads AQEQEEQEEEEEEEEAKQEEGQGTEEGL. The segment covering 256-266 has biased composition (polar residues); sequence QSKSLSSNPSF. The tract at residues 316–424 is pro-ACR binding; that stretch reads LPHTETLMVL…NQAKIPEKGR (109 aa).

Binds pro-ACR. Does not bind the mature form of ACR. As to quaternary structure, binds pro-ACR. Does not bind mature form of ACR. In terms of processing, the N-terminus is blocked. Phosphorylated on Tyr residues in capacitated sperm. Post-translationally, synthesized as a 60-kDa precursor, the 32-kDa mature form is post-translationally produced by the removal of the N-terminal half of the precursor during sperm maturation in the testis and/or epididymis.

It localises to the cytoplasmic vesicle. Its subcellular location is the secretory vesicle. The protein resides in the acrosome. Functionally, acrosomal protein that maintains proacrosin (pro-ACR) as an enzymatically inactive zymogen in the acrosome. Involved also in the acrosome formation. In terms of biological role, maintains pro-ACR as an enzymatically inactive zymogen in the acrosome until acrosomal exocytosis. Partially also contributes to the assembly of acrosomal proteins to form an acrosomal granule. Rodent specific isoform that participates in the formation of the acrosomal granule into the center of the acrosomal vesicle during early spermiogenesis. In the fertilization process promotes ACR release from the acrosome during acrosomal exocytosis. This is Acrosin-binding protein from Rattus norvegicus (Rat).